The following is a 478-amino-acid chain: MIQVLLVTICLAVFPYQGSSKTLKSGNVNDYEVVNPQAVTGLPKGAVKQPEKKYEDTMQYEFEVNGEPVVLHLEKNRGLFSKDYSETHYSPDGREITTNPAVEDHCYYHGRIQNDADSTASISACNGLKGYFTLRGETYLIEPLKLPDSEAHAVYKYENIEKEDEAPKMCGVTQTNWASDEPIKKASQLNLTPEQQRFEPRYIELVIVADHAMVTKYNGDLAAITTWVHQLVNNINGFYRDLNVHITLSAVEVWTNGDLINVQPAASVTLNLFGEWRERDLLNRRMHDHAQLLTGIDLDDNIIGLAYDDSMCDPRYSVGIVQDHSAIIRLVAVTMAHELGHNLGMNHDGDQCNCGANGCVMSVVLIEQRSYQFSDCSKNKYQTYLTNRNPQCILNQPLRTDTVSTPVSGNELLQNSGNPCCDPVTCQPRRGEHCVSGKCCRNCKFLRAGTVCKRAVGDDMDDYCTGISSDCPRNPYKD.

Residues 1–20 (MIQVLLVTICLAVFPYQGSS) form the signal peptide. The propeptide occupies 21 to 194 (KTLKSGNVND…KASQLNLTPE (174 aa)). Residue Gln-195 is modified to Pyrrolidone carboxylic acid. Residues 201 to 397 (RYIELVIVAD…RNPQCILNQP (197 aa)) form the Peptidase M12B domain. Residues Glu-204 and Asp-288 each contribute to the Ca(2+) site. 3 disulfide bridges follow: Cys-312-Cys-392, Cys-352-Cys-376, and Cys-354-Cys-359. Residue His-337 participates in Zn(2+) binding. Residue Glu-338 is part of the active site. Residues His-341 and His-347 each coordinate Zn(2+). Ca(2+)-binding residues include Cys-392 and Asn-395. A propeptide spanning residues 398–413 (LRTDTVSTPVSGNELL) is cleaved from the precursor. Residues 405-478 (TPVSGNELLQ…SDCPRNPYKD (74 aa)) enclose the Disintegrin domain. Disulfide bonds link Cys-420–Cys-443, Cys-434–Cys-440, Cys-439–Cys-464, and Cys-452–Cys-471. A Cell attachment site; atypical (VGD) motif is present at residues 456 to 458 (VGD).

Belongs to the venom metalloproteinase (M12B) family. P-II subfamily. P-IIe sub-subfamily. In terms of assembly, monomer (metalloproteinase). Heterodimer; disulfide-linked (disintegrin). Zn(2+) serves as cofactor. Expressed by the venom gland.

The protein resides in the secreted. Its activity is regulated as follows. Fibrinolytic and caseinolytic activities are inhibited by Cd(2+), Cu(2+) and Co(2+) ions. Not inhibited by Mg(2+), Ca(2+) and Ba(2+). Also inhibited by EDTA, EGTA and 1,10-phenanthroline. Functionally, fibrinolytic and fibrinogenolytic metalloproteinase that hydrolyzes the Aalpha-chain and more slowly the Bbeta-chain of fibrin and fibrinogen. Its fibrinolytic activity is direct, without any plasminogen activation. Also hydrolyzes casein and B-chain of oxidized insulin. Inhibits ADP-induced and collagen-induced platelet aggregation. Shows low hemorrhagic activity. Cleaves the plasma proteinase inhibitors alpha(2)-macroglobulin (A2M) and pregnancy zone protein (PZP), and is inhibited by them. The metalloprotease has no strict P1-P1' specificity requirement. Hydrolysis at sites with a Pro residue at P1 is observed with bradykinin, substance P, PZP and alpha chain fibrinogen (FGA). Its function is as follows. Poor inhibitor of platelet aggregation. The disintegrin inhibits the adhesion of the alpha-4/beta-1 (ITGA4/ITGB1) integrin to VCAM-1. Inhibition on alpha-2b/beta-3 (ITGA2B/ITGB3) is low. The polypeptide is Zinc metalloproteinase/disintegrin (Macrovipera lebetinus (Levantine viper)).